The primary structure comprises 360 residues: Phosphoserine aminotransferase (360 aa).

Position 42 (R42) interacts with L-glutamate. Residues 76-77 (AS), W102, T152, D172, and Q195 each bind pyridoxal 5'-phosphate. An N6-(pyridoxal phosphate)lysine modification is found at K196. 237–238 (NT) is a binding site for pyridoxal 5'-phosphate.

It belongs to the class-V pyridoxal-phosphate-dependent aminotransferase family. SerC subfamily. As to quaternary structure, homodimer. Pyridoxal 5'-phosphate is required as a cofactor.

The protein resides in the cytoplasm. It catalyses the reaction O-phospho-L-serine + 2-oxoglutarate = 3-phosphooxypyruvate + L-glutamate. The enzyme catalyses 4-(phosphooxy)-L-threonine + 2-oxoglutarate = (R)-3-hydroxy-2-oxo-4-phosphooxybutanoate + L-glutamate. Its pathway is amino-acid biosynthesis; L-serine biosynthesis; L-serine from 3-phospho-D-glycerate: step 2/3. Its function is as follows. Catalyzes the reversible conversion of 3-phosphohydroxypyruvate to phosphoserine and of 3-hydroxy-2-oxo-4-phosphonooxybutanoate to phosphohydroxythreonine. The chain is Phosphoserine aminotransferase from Bacillus cereus (strain ATCC 14579 / DSM 31 / CCUG 7414 / JCM 2152 / NBRC 15305 / NCIMB 9373 / NCTC 2599 / NRRL B-3711).